The chain runs to 424 residues: Tyrosine--tRNA ligase 1 (424 aa).

Tyr37 contributes to the L-tyrosine binding site. Positions 42-51 match the 'HIGH' region motif; the sequence is PTADSLHLGH. Residues Tyr175 and Gln179 each contribute to the L-tyrosine site. Residues 235-239 carry the 'KMSKS' region motif; the sequence is KFGKT. Position 238 (Lys238) interacts with ATP. In terms of domain architecture, S4 RNA-binding spans 357–414; sequence ADLQQALVNAGLVPSRGQARTMISSNAVAINGEKQSEPEYLFTDSNRLFDRYTLLRRG.

This sequence belongs to the class-I aminoacyl-tRNA synthetase family. TyrS type 1 subfamily. As to quaternary structure, homodimer.

It is found in the cytoplasm. It catalyses the reaction tRNA(Tyr) + L-tyrosine + ATP = L-tyrosyl-tRNA(Tyr) + AMP + diphosphate + H(+). Its function is as follows. Catalyzes the attachment of tyrosine to tRNA(Tyr) in a two-step reaction: tyrosine is first activated by ATP to form Tyr-AMP and then transferred to the acceptor end of tRNA(Tyr). This chain is Tyrosine--tRNA ligase 1, found in Photorhabdus laumondii subsp. laumondii (strain DSM 15139 / CIP 105565 / TT01) (Photorhabdus luminescens subsp. laumondii).